Here is a 418-residue protein sequence, read N- to C-terminus: Mitochondrial outer membrane protein SLC25A46 (418 aa).

Phosphoserine is present on residues Ser32 and Ser35. Residue Thr45 is modified to Phosphothreonine. Residues 46-96 (PPDIPGSRNLHWGEKSPSYGVPSAPPTLEGPAEEPFPGGGDGPRPGRSSEQ) form a disordered region. Residues 96–187 (QLNRFAGFGI…GIISEFTPLP (92 aa)) form a Solcar 1 repeat. Transmembrane regions (helical) follow at residues 103–123 (FGIG…CIVL), 167–187 (FIVQ…TPLP), 202–222 (HLLL…ASLI), 258–278 (LLPL…HYII), 314–334 (FPEL…LYPL), and 382–402 (VFGF…HATI). One copy of the Solcar 2 repeat lies at 311-416 (DAYFPELIAN…KIIYSTLLQN (106 aa)).

Belongs to the mitochondrial carrier (TC 2.A.29) family. Associates with the mitochondrial contact site and cristae organizing system (MICOS) complex. May associate with the endoplasmic reticulum membrane protein complex (EMC). Widely expressed. Highly expressed in hindbrain, spinal cord and brain coronal sections containing corpus callosum, fornix, optic chiasm, thalamus, hypothalamus, midbrain, pons and cerebellum.

It localises to the mitochondrion outer membrane. Its function is as follows. Transmembrane protein of the mitochondrial outer membrane that controls mitochondrial organization. May regulate the assembly of the MICOS (mitochondrial contact site and cristae organizing system) complex which is essential to the biogenesis and dynamics of mitochondrial cristae, the inwards folds of the inner mitochondrial membrane. Through its interaction with the EMC (endoplasmic reticulum membrane protein complex), could regulate mitochondrial lipid homeostasis and thereby mitochondrial fission. The chain is Mitochondrial outer membrane protein SLC25A46 from Rattus norvegicus (Rat).